The following is a 310-amino-acid chain: tRNA dimethylallyltransferase (310 aa).

ATP is bound at residue Gly-14–Ser-21. Thr-16 to Ser-21 lines the substrate pocket. Interaction with substrate tRNA stretches follow at residues Asp-39–Gln-42 and Gln-163–Arg-167.

It belongs to the IPP transferase family. In terms of assembly, monomer. Requires Mg(2+) as cofactor.

It carries out the reaction adenosine(37) in tRNA + dimethylallyl diphosphate = N(6)-dimethylallyladenosine(37) in tRNA + diphosphate. Functionally, catalyzes the transfer of a dimethylallyl group onto the adenine at position 37 in tRNAs that read codons beginning with uridine, leading to the formation of N6-(dimethylallyl)adenosine (i(6)A). In Brucella abortus (strain S19), this protein is tRNA dimethylallyltransferase.